The primary structure comprises 163 residues: Lysosomal enzyme trafficking factor (163 aa).

The next 2 membrane-spanning stretches (helical) occupy residues 40-60 and 98-118; these read MGWIGVGLYLLASAAAFYYVF and LPFWVWTVIFLVPYLQMFLFL.

Belongs to the LYSET family. In terms of assembly, interacts with GNPTAB; this interaction is important for proper localization of GNPTAB in Golgi stacks. Interacts with MBTPS1.

It is found in the golgi apparatus membrane. Its function is as follows. Required for mannose-6-phosphate-dependent trafficking of lysosomal enzymes. LYSET bridges GlcNAc-1-phosphate transferase (GNPTAB), to the membrane-bound transcription factor site-1 protease (MBTPS1), thus allowing proteolytic activation of the GNPTAB. GNPTAB is involved in the regulation of M6P-dependent Golgi-to-lysosome trafficking of lysosomal enzymes. LYSET is thus an essential factor for maturation and delivery of lysosomal hydrolases. In terms of biological role, (Microbial infection) Essential for infection by muliple viruses, including SARS-CoV-2, that utilize activated cathepsins for entry after M6P-dependent lysosomal transport. The sequence is that of Lysosomal enzyme trafficking factor from Homo sapiens (Human).